The sequence spans 187 residues: uncharacterized protein (187 aa).

The next 4 helical transmembrane spans lie at 29 to 50, 70 to 92, 128 to 147, and 154 to 176; these read IFIDIFIGVWAFILAVVWVYWI, FVIGYFLTFVIVAWLTSAAINAY, IFFALTFFSIGVISDFSVLR, and LALVYFVCLFGFIIWIGLAISYL.

It is found in the cell membrane. This is an uncharacterized protein from Archaeoglobus fulgidus (strain ATCC 49558 / DSM 4304 / JCM 9628 / NBRC 100126 / VC-16).